The chain runs to 142 residues: Ribosome-binding factor A (142 aa).

The disordered stretch occupies residues 120-142 (TLGEVQSESDQPTTYETTTVNKT). Residues 123-142 (EVQSESDQPTTYETTTVNKT) are compositionally biased toward polar residues.

The protein belongs to the RbfA family. Monomer. Binds 30S ribosomal subunits, but not 50S ribosomal subunits or 70S ribosomes.

The protein localises to the cytoplasm. Its function is as follows. One of several proteins that assist in the late maturation steps of the functional core of the 30S ribosomal subunit. Associates with free 30S ribosomal subunits (but not with 30S subunits that are part of 70S ribosomes or polysomes). Required for efficient processing of 16S rRNA. May interact with the 5'-terminal helix region of 16S rRNA. The polypeptide is Ribosome-binding factor A (Prochlorococcus marinus (strain MIT 9313)).